The sequence spans 274 residues: uncharacterized protein (274 aa).

The C2 NT-type domain maps to 3–141 (IFIPKARRPT…TIRIGISLKQ (139 aa)).

It to yeast YBL086c.

This is an uncharacterized protein from Schizosaccharomyces pombe (strain 972 / ATCC 24843) (Fission yeast).